The chain runs to 160 residues: MVPKLFTSQICLLLLLGLMGVEGSLHARPPQFTRAQWFAIQHISLNPPRCTIAMRVINNYRWRCKNQNTFLRTTFANVVNVCGNQSIRCLHNRTLNNCHRSRFRVPLLHCDLINPGAQNISNCRYADRPGRRFYVVACDNRDPQDSPRYPVVPVHLDTTI.

Positions 1–27 (MVPKLFTSQICLLLLLGLMGVEGSLHA) are cleaved as a signal peptide. Positions 28–72 (RPPQFTRAQWFAIQHISLNPPRCTIAMRVINNYRWRCKNQNTFLR) are required for nearly all of the bactericidal activities; partially involved in LPS-binding. Catalysis depends on His42, which acts as the Proton acceptor. Disulfide bonds link Cys50-Cys110, Cys64-Cys123, Cys82-Cys138, and Cys89-Cys98. Tyr60 is modified (3'-nitrotyrosine). Residue 65–69 (KNQNT) coordinates substrate. 3 N-linked (GlcNAc...) asparagine glycosylation sites follow: Asn84, Asn92, and Asn119. The active-site Proton donor is His155.

Belongs to the pancreatic ribonuclease family. Interacts with bacterial lipopolysaccharide (LPS) and lipoteichoic acid (LTA). In vitro interacts with phospholipid bilayers.

It localises to the secreted. Its function is as follows. Cytotoxin and helminthotoxin with low-efficiency ribonuclease activity. Possesses a wide variety of biological activities. Exhibits antibacterial activity. This Gorilla gorilla gorilla (Western lowland gorilla) protein is Eosinophil cationic protein (RNASE3).